Here is a 145-residue protein sequence, read N- to C-terminus: Putative pre-16S rRNA nuclease (145 aa).

Belongs to the YqgF nuclease family.

It localises to the cytoplasm. Functionally, could be a nuclease involved in processing of the 5'-end of pre-16S rRNA. In Pseudomonas fluorescens (strain ATCC BAA-477 / NRRL B-23932 / Pf-5), this protein is Putative pre-16S rRNA nuclease.